A 188-amino-acid polypeptide reads, in one-letter code: MDSSEVVKVKQASIPAPGSILSQPNTEQSPAIVLPFQFEATTFGTAETAAQVSLQTADPITKLTAPYRHAQIVECKAILTPTDLAVSNPLTVYLAWVPANSPATPTQILRVYGGQSFVLGGAISAAKTIEVPLNLDSVNRMLKDSVTYTDTPKLLAYSRAPTNPSKIPTASIQISGRIRLSKPMLIAN.

The protein belongs to the tymoviruses capsid protein family.

It is found in the virion. Its function is as follows. Self-assembles to form a T=3 icosahedral capsid composed of 180 copies of the capsid protein. The capsid encapsulates the single-stranded RNA genome. The protein is Capsid protein of Physalis heterophylla (PhMV).